A 555-amino-acid polypeptide reads, in one-letter code: Prespore protein Dp87 (555 aa).

The N-terminal stretch at 1–22 (MRILYLASLLFLITLYLSPTFG) is a signal peptide. One can recognise a DSCP-N domain in the interval 27–144 (RDCESHRSEY…RIPRCVGHHG (118 aa)). N-linked (GlcNAc...) asparagine glycosylation is present at Asn103. Follistatin-like domains follow at residues 148–170 (KCDR…ACCV), 175–197 (GCGN…CRCV), 209–231 (QCRN…ATCV), 240–262 (LCRG…PVCV), 276–298 (ICGS…PTCI), 304–327 (LCNQ…VKCS), 332–354 (ECKW…PHCL), and 362–384 (LCKV…PTCI). Asn306 carries N-linked (GlcNAc...) asparagine glycosylation. Residue Asn418 is glycosylated (N-linked (GlcNAc...) asparagine). Residues 454–555 (TTSATTAGTT…ESSESSSATS (102 aa)) form a disordered region. Positions 470–555 (GGSTSDSSAA…ESSESSSATS (86 aa)) are enriched in low complexity.

It is found in the spore wall. This is Prespore protein Dp87 (cotD) from Dictyostelium discoideum (Social amoeba).